Here is a 688-residue protein sequence, read N- to C-terminus: Translation initiation factor IF-2 (688 aa).

The segment covering 50 to 62 has biased composition (basic and acidic residues); sequence LLSGKEKSEKTKE. A disordered region spans residues 50–95; it reads LLSGKEKSEKTKEEDDEIETTAKNPIKESINNKKSNKRDDKKEKVN. The span at 72–82 shows a compositional bias: low complexity; that stretch reads KNPIKESINNK. Residues 86 to 95 are compositionally biased toward basic and acidic residues; the sequence is KRDDKKEKVN. The 168-residue stretch at 187 to 354 folds into the tr-type G domain; sequence KRSPIITVMG…MILLSSEILE (168 aa). The G1 stretch occupies residues 196–203; sequence GHVDHGKT. 196–203 is a GTP binding site; sequence GHVDHGKT. Residues 221-225 form a G2 region; it reads GITQH. The segment at 242 to 245 is G3; that stretch reads DTPG. GTP-binding positions include 242 to 246 and 296 to 299; these read DTPGH and NKID. A G4 region spans residues 296-299; the sequence is NKID. A G5 region spans residues 332-334; the sequence is SAH.

Belongs to the TRAFAC class translation factor GTPase superfamily. Classic translation factor GTPase family. IF-2 subfamily.

It localises to the cytoplasm. In terms of biological role, one of the essential components for the initiation of protein synthesis. Protects formylmethionyl-tRNA from spontaneous hydrolysis and promotes its binding to the 30S ribosomal subunits. Also involved in the hydrolysis of GTP during the formation of the 70S ribosomal complex. This chain is Translation initiation factor IF-2, found in Clostridium botulinum (strain 657 / Type Ba4).